Reading from the N-terminus, the 3106-residue chain is Cilia- and flagella-associated protein 54 (3106 aa).

Composition is skewed to low complexity over residues 1–24 (MASS…VSPV), 34–48 (STAV…KSSS), and 2356–2368 (ESCS…TSTT). 2 disordered regions span residues 1-58 (MASS…THSE) and 2354-2374 (PEES…KDDS).

The protein belongs to the CFAP54 family. Expressed at high level in the testis and at a low level in the lung and brain.

Its subcellular location is the cytoplasm. It localises to the cytoskeleton. The protein localises to the cilium axoneme. In terms of biological role, required for assembly and function of cilia and flagella. This is Cilia- and flagella-associated protein 54 from Mus musculus (Mouse).